Here is a 436-residue protein sequence, read N- to C-terminus: 3-phosphoshikimate 1-carboxyvinyltransferase (436 aa).

3-phosphoshikimate-binding residues include Lys-23, Ser-24, and Arg-28. Lys-23 is a binding site for phosphoenolpyruvate. Phosphoenolpyruvate is bound by residues Gly-97 and Arg-126. Positions 171, 173, 323, and 350 each coordinate 3-phosphoshikimate. Position 173 (Gln-173) interacts with phosphoenolpyruvate. Asp-323 (proton acceptor) is an active-site residue. Residues Arg-354 and Arg-396 each contribute to the phosphoenolpyruvate site.

This sequence belongs to the EPSP synthase family. In terms of assembly, monomer.

Its subcellular location is the cytoplasm. It catalyses the reaction 3-phosphoshikimate + phosphoenolpyruvate = 5-O-(1-carboxyvinyl)-3-phosphoshikimate + phosphate. It participates in metabolic intermediate biosynthesis; chorismate biosynthesis; chorismate from D-erythrose 4-phosphate and phosphoenolpyruvate: step 6/7. In terms of biological role, catalyzes the transfer of the enolpyruvyl moiety of phosphoenolpyruvate (PEP) to the 5-hydroxyl of shikimate-3-phosphate (S3P) to produce enolpyruvyl shikimate-3-phosphate and inorganic phosphate. This is 3-phosphoshikimate 1-carboxyvinyltransferase from Prochlorococcus marinus (strain AS9601).